The primary structure comprises 286 residues: Shikimate dehydrogenase (NADP(+)) (286 aa).

Residues 25–27 and T72 each bind shikimate; that span reads SLS. K76 (proton acceptor) is an active-site residue. E88 contacts NADP(+). Positions 97 and 113 each coordinate shikimate. NADP(+) contacts are provided by residues 138 to 142, 162 to 167, and I232; these read GSGGA and NRTIER. Y234 contributes to the shikimate binding site. G255 serves as a coordination point for NADP(+).

It belongs to the shikimate dehydrogenase family. As to quaternary structure, homodimer.

The enzyme catalyses shikimate + NADP(+) = 3-dehydroshikimate + NADPH + H(+). It participates in metabolic intermediate biosynthesis; chorismate biosynthesis; chorismate from D-erythrose 4-phosphate and phosphoenolpyruvate: step 4/7. Its function is as follows. Involved in the biosynthesis of the chorismate, which leads to the biosynthesis of aromatic amino acids. Catalyzes the reversible NADPH linked reduction of 3-dehydroshikimate (DHSA) to yield shikimate (SA). This Magnetococcus marinus (strain ATCC BAA-1437 / JCM 17883 / MC-1) protein is Shikimate dehydrogenase (NADP(+)).